Consider the following 104-residue polypeptide: Large ribosomal subunit protein uL24 (104 aa).

It belongs to the universal ribosomal protein uL24 family. In terms of assembly, part of the 50S ribosomal subunit.

In terms of biological role, one of two assembly initiator proteins, it binds directly to the 5'-end of the 23S rRNA, where it nucleates assembly of the 50S subunit. Its function is as follows. One of the proteins that surrounds the polypeptide exit tunnel on the outside of the subunit. This chain is Large ribosomal subunit protein uL24, found in Hydrogenovibrio crunogenus (strain DSM 25203 / XCL-2) (Thiomicrospira crunogena).